A 389-amino-acid chain; its full sequence is Flagellar P-ring protein (389 aa).

An N-terminal signal peptide occupies residues M1–A33.

This sequence belongs to the FlgI family. As to quaternary structure, the basal body constitutes a major portion of the flagellar organelle and consists of four rings (L,P,S, and M) mounted on a central rod.

It localises to the periplasm. The protein localises to the bacterial flagellum basal body. Functionally, assembles around the rod to form the L-ring and probably protects the motor/basal body from shearing forces during rotation. The sequence is that of Flagellar P-ring protein from Burkholderia mallei (strain ATCC 23344).